A 483-amino-acid polypeptide reads, in one-letter code: Probable pectate lyase 12 (483 aa).

Positions 1–24 are cleaved as a signal peptide; sequence MMLQRSCIVLFFSLFLLVPQMVFS. Asn27 and Asn50 each carry an N-linked (GlcNAc...) asparagine glycan. 3 residues coordinate Ca(2+): Asp220, Asp244, and Asp248. The active site involves Arg300.

It belongs to the polysaccharide lyase 1 family. Requires Ca(2+) as cofactor.

The catalysed reaction is Eliminative cleavage of (1-&gt;4)-alpha-D-galacturonan to give oligosaccharides with 4-deoxy-alpha-D-galact-4-enuronosyl groups at their non-reducing ends.. It participates in glycan metabolism; pectin degradation; 2-dehydro-3-deoxy-D-gluconate from pectin: step 2/5. This Arabidopsis thaliana (Mouse-ear cress) protein is Probable pectate lyase 12.